A 350-amino-acid polypeptide reads, in one-letter code: Renin receptor (350 aa).

The first 16 residues, 1–16 (MAVFVVLLALVAGVLG), serve as a signal peptide directing secretion. Residues 17-302 (NEFSILKSPG…YNLAYKYNFE (286 aa)) lie on the Extracellular side of the membrane. The chain crosses the membrane as a helical span at residues 303-323 (YSVVFNMVLWIMIALALAVII). Over 324–350 (TSYNIWNMDPGYDSIIYRMTNQKIRMD) the chain is Cytoplasmic. The Mediates retrograde transport to the ER motif lies at 346–350 (KIRMD).

As to quaternary structure, interacts with renin. Accessory component of the multisubunit proton-transporting vacuolar (V)-ATPase protein pump. Interacts (via N-terminus) with ATP6AP1 (via N-terminus). Interacts with ATP6V0D1; ATP6V0D1 is a V-ATPase complex subunit and the interaction promotes V-ATPase complex assembly. Interacts with TMEM9; TMEM9 is a V-ATPase assembly regulator and the interaction induces the interaction with ATP6V0D1. Interacts with VMA21 (via N-terminus); VMA21 is a V-ATPase accessory component. Post-translationally, phosphorylated. In terms of processing, proteolytically cleaved by a furin-like convertase in the trans-Golgi network to generate N- and C-terminal fragments. As to expression, expressed in brain, heart, placenta, liver, kidney and pancreas. Barely detectable in lung and skeletal muscles. In the kidney cortex it is restricted to the mesangium of glomeruli. In the coronary and kidney artery it is expressed in the subendothelium, associated to smooth muscles where it colocalizes with REN. Expressed in vascular structures and by syncytiotrophoblast cells in the mature fetal placenta.

It localises to the endoplasmic reticulum membrane. It is found in the lysosome membrane. Its subcellular location is the cytoplasmic vesicle. The protein localises to the autophagosome membrane. The protein resides in the cell projection. It localises to the dendritic spine membrane. It is found in the axon. Its subcellular location is the endosome membrane. The protein localises to the clathrin-coated vesicle membrane. The protein resides in the secretory vesicle. It localises to the synaptic vesicle membrane. Functionally, multifunctional protein which functions as a renin, prorenin cellular receptor and is involved in the assembly of the lysosomal proton-transporting V-type ATPase (V-ATPase) and the acidification of the endo-lysosomal system. May mediate renin-dependent cellular responses by activating ERK1 and ERK2. By increasing the catalytic efficiency of renin in AGT/angiotensinogen conversion to angiotensin I, may also play a role in the renin-angiotensin system (RAS). Through its function in V-type ATPase (v-ATPase) assembly and acidification of the lysosome it regulates protein degradation and may control different signaling pathways important for proper brain development, synapse morphology and synaptic transmission. The chain is Renin receptor from Homo sapiens (Human).